The chain runs to 369 residues: Glutamate 5-kinase (369 aa).

Residue lysine 9 participates in ATP binding. Substrate is bound by residues serine 49, aspartate 136, and asparagine 148. ATP is bound by residues 168 to 169 (TD) and 210 to 216 (TGGMLTK). In terms of domain architecture, PUA spans 275 to 355 (QGEIYVDQGA…KGVVIHRDDW (81 aa)).

It belongs to the glutamate 5-kinase family.

It is found in the cytoplasm. It carries out the reaction L-glutamate + ATP = L-glutamyl 5-phosphate + ADP. The protein operates within amino-acid biosynthesis; L-proline biosynthesis; L-glutamate 5-semialdehyde from L-glutamate: step 1/2. Functionally, catalyzes the transfer of a phosphate group to glutamate to form L-glutamate 5-phosphate. This is Glutamate 5-kinase from Streptococcus gordonii (strain Challis / ATCC 35105 / BCRC 15272 / CH1 / DL1 / V288).